A 331-amino-acid chain; its full sequence is Beta-ketoacyl-[acyl-carrier-protein] synthase III (331 aa).

Catalysis depends on residues cysteine 115 and histidine 255. Positions 256–260 are ACP-binding; the sequence is QANFR. Asparagine 285 is a catalytic residue.

This sequence belongs to the thiolase-like superfamily. FabH family. In terms of assembly, homodimer.

The protein resides in the cytoplasm. It carries out the reaction malonyl-[ACP] + acetyl-CoA + H(+) = 3-oxobutanoyl-[ACP] + CO2 + CoA. It functions in the pathway lipid metabolism; fatty acid biosynthesis. Functionally, catalyzes the condensation reaction of fatty acid synthesis by the addition to an acyl acceptor of two carbons from malonyl-ACP. Catalyzes the first condensation reaction which initiates fatty acid synthesis and may therefore play a role in governing the total rate of fatty acid production. Possesses both acetoacetyl-ACP synthase and acetyl transacylase activities. Its substrate specificity determines the biosynthesis of branched-chain and/or straight-chain of fatty acids. This chain is Beta-ketoacyl-[acyl-carrier-protein] synthase III, found in Helicobacter pylori (strain J99 / ATCC 700824) (Campylobacter pylori J99).